Here is a 313-residue protein sequence, read N- to C-terminus: Serine/threonine-protein phosphatase CPPED1 (313 aa).

At serine 2 the chain carries Phosphoserine. Residues 47-250 (KAWATGDCDN…AVFSGHYHRN (204 aa)) are catalytic. A divalent metal cation is bound by residues aspartate 53, aspartate 90, asparagine 127, and histidine 246. Serine 293 is subject to Phosphoserine.

It belongs to the metallophosphoesterase superfamily. CPPED1 family. Requires a divalent metal cation as cofactor.

It is found in the cytoplasm. The catalysed reaction is O-phospho-L-seryl-[protein] + H2O = L-seryl-[protein] + phosphate. The enzyme catalyses O-phospho-L-threonyl-[protein] + H2O = L-threonyl-[protein] + phosphate. Functionally, protein phosphatase that dephosphorylates AKT family kinase specifically at 'Ser-473', blocking cell cycle progression and promoting cell apoptosis. May play an inhibitory role in glucose uptake by adipocytes. The chain is Serine/threonine-protein phosphatase CPPED1 (CPPED1) from Bos taurus (Bovine).